Here is a 101-residue protein sequence, read N- to C-terminus: Urease subunit beta (101 aa).

It belongs to the urease beta subunit family. Heterotrimer of UreA (gamma), UreB (beta) and UreC (alpha) subunits. Three heterotrimers associate to form the active enzyme.

Its subcellular location is the cytoplasm. It catalyses the reaction urea + 2 H2O + H(+) = hydrogencarbonate + 2 NH4(+). The protein operates within nitrogen metabolism; urea degradation; CO(2) and NH(3) from urea (urease route): step 1/1. The polypeptide is Urease subunit beta (Cupriavidus necator (strain ATCC 17699 / DSM 428 / KCTC 22496 / NCIMB 10442 / H16 / Stanier 337) (Ralstonia eutropha)).